The chain runs to 95 residues: Aspartyl/glutamyl-tRNA(Asn/Gln) amidotransferase subunit C (95 aa).

This sequence belongs to the GatC family. As to quaternary structure, heterotrimer of A, B and C subunits.

The catalysed reaction is L-glutamyl-tRNA(Gln) + L-glutamine + ATP + H2O = L-glutaminyl-tRNA(Gln) + L-glutamate + ADP + phosphate + H(+). The enzyme catalyses L-aspartyl-tRNA(Asn) + L-glutamine + ATP + H2O = L-asparaginyl-tRNA(Asn) + L-glutamate + ADP + phosphate + 2 H(+). In terms of biological role, allows the formation of correctly charged Asn-tRNA(Asn) or Gln-tRNA(Gln) through the transamidation of misacylated Asp-tRNA(Asn) or Glu-tRNA(Gln) in organisms which lack either or both of asparaginyl-tRNA or glutaminyl-tRNA synthetases. The reaction takes place in the presence of glutamine and ATP through an activated phospho-Asp-tRNA(Asn) or phospho-Glu-tRNA(Gln). In Alcanivorax borkumensis (strain ATCC 700651 / DSM 11573 / NCIMB 13689 / SK2), this protein is Aspartyl/glutamyl-tRNA(Asn/Gln) amidotransferase subunit C.